The following is a 513-amino-acid chain: ATP synthase subunit alpha (513 aa).

169–176 is an ATP binding site; that stretch reads GDRQCGKT.

The protein belongs to the ATPase alpha/beta chains family. F-type ATPases have 2 components, CF(1) - the catalytic core - and CF(0) - the membrane proton channel. CF(1) has five subunits: alpha(3), beta(3), gamma(1), delta(1), epsilon(1). CF(0) has three main subunits: a(1), b(2) and c(9-12). The alpha and beta chains form an alternating ring which encloses part of the gamma chain. CF(1) is attached to CF(0) by a central stalk formed by the gamma and epsilon chains, while a peripheral stalk is formed by the delta and b chains.

It localises to the cell inner membrane. It carries out the reaction ATP + H2O + 4 H(+)(in) = ADP + phosphate + 5 H(+)(out). Produces ATP from ADP in the presence of a proton gradient across the membrane. The alpha chain is a regulatory subunit. The chain is ATP synthase subunit alpha from Alteromonas mediterranea (strain DSM 17117 / CIP 110805 / LMG 28347 / Deep ecotype).